A 139-amino-acid chain; its full sequence is uncharacterized protein (139 aa).

The chain crosses the membrane as a helical span at residues 77 to 97 (YCFFFFLVLFLNGIIATRGKA).

The protein resides in the mitochondrion membrane. This is an uncharacterized protein from Arabidopsis thaliana (Mouse-ear cress).